Here is a 242-residue protein sequence, read N- to C-terminus: Tropomyosin-1 (242 aa).

2 disordered regions span residues 1–31 (MDAI…ELTA) and 65–96 (TSLT…QTDY). Residues 1–242 (MDAIKKKMSA…DELLLELASM (242 aa)) are a coiled coil. Composition is skewed to basic and acidic residues over residues 13–23 (TKLEEADKQAQ) and 70–96 (KYNE…QTDY).

It belongs to the tropomyosin family. As to quaternary structure, homodimer. Expressed ubiquitously.

In Podocoryna carnea (Hydrozoan), this protein is Tropomyosin-1 (TPM1).